The chain runs to 338 residues: S-adenosylmethionine:tRNA ribosyltransferase-isomerase (338 aa).

The protein belongs to the QueA family. As to quaternary structure, monomer.

It is found in the cytoplasm. It carries out the reaction 7-aminomethyl-7-carbaguanosine(34) in tRNA + S-adenosyl-L-methionine = epoxyqueuosine(34) in tRNA + adenine + L-methionine + 2 H(+). It functions in the pathway tRNA modification; tRNA-queuosine biosynthesis. Its function is as follows. Transfers and isomerizes the ribose moiety from AdoMet to the 7-aminomethyl group of 7-deazaguanine (preQ1-tRNA) to give epoxyqueuosine (oQ-tRNA). The sequence is that of S-adenosylmethionine:tRNA ribosyltransferase-isomerase from Francisella tularensis subsp. novicida (strain U112).